The chain runs to 160 residues: 3-dehydroquinate dehydratase (160 aa).

The active-site Proton acceptor is Tyr-28. Substrate is bound by residues Asn-79, His-85, and Asp-92. The Proton donor role is filled by His-105. Substrate contacts are provided by residues 106-107 and Arg-116; that span reads MS.

The protein belongs to the type-II 3-dehydroquinase family. Homododecamer.

It catalyses the reaction 3-dehydroquinate = 3-dehydroshikimate + H2O. Its pathway is metabolic intermediate biosynthesis; chorismate biosynthesis; chorismate from D-erythrose 4-phosphate and phosphoenolpyruvate: step 3/7. In terms of biological role, catalyzes a trans-dehydration via an enolate intermediate. This is 3-dehydroquinate dehydratase from Gloeobacter violaceus (strain ATCC 29082 / PCC 7421).